Consider the following 484-residue polypeptide: Malonate-semialdehyde dehydrogenase 3 (484 aa).

NAD(+)-binding residues include Phe-152, Lys-176, Glu-179, Arg-180, and Ser-229. Cys-284 (nucleophile) is an active-site residue. Residue Glu-384 participates in NAD(+) binding.

It belongs to the aldehyde dehydrogenase family. IolA subfamily. As to quaternary structure, homotetramer.

The enzyme catalyses 3-oxopropanoate + NAD(+) + CoA + H2O = hydrogencarbonate + acetyl-CoA + NADH + H(+). It catalyses the reaction 2-methyl-3-oxopropanoate + NAD(+) + CoA + H2O = propanoyl-CoA + hydrogencarbonate + NADH + H(+). It functions in the pathway polyol metabolism; myo-inositol degradation into acetyl-CoA; acetyl-CoA from myo-inositol: step 7/7. Catalyzes the oxidation of malonate semialdehyde (MSA) and methylmalonate semialdehyde (MMSA) into acetyl-CoA and propanoyl-CoA, respectively. Is involved in a myo-inositol catabolic pathway. Bicarbonate, and not CO2, is the end-product of the enzymatic reaction. The chain is Malonate-semialdehyde dehydrogenase 3 from Geobacillus kaustophilus (strain HTA426).